Here is a 168-residue protein sequence, read N- to C-terminus: Ribulose bisphosphate carboxylase small subunit, chloroplastic (168 aa).

The transit peptide at 1-28 (MASIAAKSVSLRAATRRAAPVAAPADAR) directs the protein to the chloroplast.

The protein belongs to the RuBisCO small chain family. In terms of assembly, heterohexadecamer of 8 large and 8 small subunits.

It localises to the plastid. It is found in the chloroplast. RuBisCO catalyzes two reactions: the carboxylation of D-ribulose 1,5-bisphosphate, the primary event in carbon dioxide fixation, as well as the oxidative fragmentation of the pentose substrate. Both reactions occur simultaneously and in competition at the same active site. Although the small subunit is not catalytic it is essential for maximal activity. The chain is Ribulose bisphosphate carboxylase small subunit, chloroplastic from Chlamydomonas moewusii (Chlamydomonas eugametos).